A 100-amino-acid chain; its full sequence is Co-chaperonin GroES (100 aa).

Belongs to the GroES chaperonin family. As to quaternary structure, heptamer of 7 subunits arranged in a ring. Interacts with the chaperonin GroEL.

The protein localises to the cytoplasm. Its function is as follows. Together with the chaperonin GroEL, plays an essential role in assisting protein folding. The GroEL-GroES system forms a nano-cage that allows encapsulation of the non-native substrate proteins and provides a physical environment optimized to promote and accelerate protein folding. GroES binds to the apical surface of the GroEL ring, thereby capping the opening of the GroEL channel. This Mycobacterium leprae (strain Br4923) protein is Co-chaperonin GroES.